A 268-amino-acid polypeptide reads, in one-letter code: MERYESLFAQLKERKEGAFVPFVTLGDPGIEQSLKIIDTLIEAGADALELGIPFSDPLADGPTIQNATLRAFAAGVTPAQCIEMLALIRQKHPTIPIGLLMYANLVFNKGIDEFYAQCEKVGVDSVLVADVPVEESAPFRQAALRHNVAPIFICPPNADDDLLRQIASYGRGYTYLLSRAGVTGAENRAALPLNHLVAKLKEYNAAPPLQGFGISAPDQVKAAIDAGAAGAISGSAIVKIIEQHINEPEKMLAALKAFVQPMKAATRS.

Catalysis depends on proton acceptor residues glutamate 49 and aspartate 60.

It belongs to the TrpA family. Tetramer of two alpha and two beta chains.

The catalysed reaction is (1S,2R)-1-C-(indol-3-yl)glycerol 3-phosphate + L-serine = D-glyceraldehyde 3-phosphate + L-tryptophan + H2O. It functions in the pathway amino-acid biosynthesis; L-tryptophan biosynthesis; L-tryptophan from chorismate: step 5/5. Its function is as follows. The alpha subunit is responsible for the aldol cleavage of indoleglycerol phosphate to indole and glyceraldehyde 3-phosphate. The protein is Tryptophan synthase alpha chain of Shigella dysenteriae serotype 1 (strain Sd197).